Consider the following 364-residue polypeptide: MKKLAISIGDINGIGLEILVRSHEELSKICTPFYFIHESLLDKASKLLNLKLFNAKIVAFKDGKDYEFNFVKKENSLEIYSFYLPLDFKVDENFEIKAGEIDTKSGLYGFLSFKAASYFVYEKHAHALLTLPIHKKAWEDAGLKYKGHTDALRDFFKKNAIMMLGCKELFVGLFSEHIPLAKVSKKITFKNLSIFLKDFYKETHFKKMGLLGFNPHAGDYGVIGGEEEKIMEKAIAFVNAFLHSKKDEKFFKKALKDENLQKELLLNFKGKGVYLPHPLVADTAFTKTGLKNCNRLVAMYHDLALAPLKALYFDKSINVSLNLPIIRVSVDHGTAFDKAYKNAKINTKSYFEAAKFAINLHSKA.

Substrate contacts are provided by H148 and T149. Residues H177, H216, and H301 each contribute to the a divalent metal cation site. Positions 309, 318, and 327 each coordinate substrate.

This sequence belongs to the PdxA family. In terms of assembly, homodimer. Requires Zn(2+) as cofactor. Mg(2+) is required as a cofactor. The cofactor is Co(2+).

Its subcellular location is the cytoplasm. It carries out the reaction 4-(phosphooxy)-L-threonine + NAD(+) = 3-amino-2-oxopropyl phosphate + CO2 + NADH. Its pathway is cofactor biosynthesis; pyridoxine 5'-phosphate biosynthesis; pyridoxine 5'-phosphate from D-erythrose 4-phosphate: step 4/5. In terms of biological role, catalyzes the NAD(P)-dependent oxidation of 4-(phosphooxy)-L-threonine (HTP) into 2-amino-3-oxo-4-(phosphooxy)butyric acid which spontaneously decarboxylates to form 3-amino-2-oxopropyl phosphate (AHAP). The polypeptide is 4-hydroxythreonine-4-phosphate dehydrogenase (Campylobacter jejuni (strain RM1221)).